A 344-amino-acid chain; its full sequence is Methionine import ATP-binding protein MetN (344 aa).

The 240-residue stretch at isoleucine 2 to isoleucine 241 folds into the ABC transporter domain. Glycine 38–serine 45 contacts ATP.

This sequence belongs to the ABC transporter superfamily. Methionine importer (TC 3.A.1.24) family. The complex is composed of two ATP-binding proteins (MetN), two transmembrane proteins (MetI) and a solute-binding protein (MetQ).

Its subcellular location is the cell inner membrane. It catalyses the reaction L-methionine(out) + ATP + H2O = L-methionine(in) + ADP + phosphate + H(+). The catalysed reaction is D-methionine(out) + ATP + H2O = D-methionine(in) + ADP + phosphate + H(+). Its function is as follows. Part of the ABC transporter complex MetNIQ involved in methionine import. Responsible for energy coupling to the transport system. The sequence is that of Methionine import ATP-binding protein MetN from Vibrio vulnificus (strain CMCP6).